The following is a 294-amino-acid chain: uncharacterized protein (294 aa).

An N-terminal signal peptide occupies residues 1–19 (MFKRSLFILLLLAASLVKA).

This is an uncharacterized protein from Rickettsia felis (strain ATCC VR-1525 / URRWXCal2) (Rickettsia azadi).